A 514-amino-acid polypeptide reads, in one-letter code: 3-octaprenyl-4-hydroxybenzoate carboxy-lyase (514 aa).

Asparagine 177 serves as a coordination point for Mn(2+). Prenylated FMN-binding positions include 180–182, 194–196, and 199–200; these read IYR, RWL, and RG. A Mn(2+)-binding site is contributed by glutamate 243. Aspartate 314 functions as the Proton donor in the catalytic mechanism.

This sequence belongs to the UbiD family. Homohexamer. Prenylated FMN is required as a cofactor. Mn(2+) serves as cofactor.

It localises to the cell membrane. The enzyme catalyses a 4-hydroxy-3-(all-trans-polyprenyl)benzoate + H(+) = a 2-(all-trans-polyprenyl)phenol + CO2. The protein operates within cofactor biosynthesis; ubiquinone biosynthesis. Catalyzes the decarboxylation of 3-octaprenyl-4-hydroxy benzoate to 2-octaprenylphenol, an intermediate step in ubiquinone biosynthesis. The protein is 3-octaprenyl-4-hydroxybenzoate carboxy-lyase of Bordetella bronchiseptica (strain ATCC BAA-588 / NCTC 13252 / RB50) (Alcaligenes bronchisepticus).